A 379-amino-acid polypeptide reads, in one-letter code: Succinyl-diaminopimelate desuccinylase (379 aa).

Residue histidine 70 participates in Zn(2+) binding. The active site involves aspartate 72. Aspartate 103 is a binding site for Zn(2+). The Proton acceptor role is filled by glutamate 137. Glutamate 138, glutamate 166, and histidine 352 together coordinate Zn(2+).

The protein belongs to the peptidase M20A family. DapE subfamily. In terms of assembly, homodimer. The cofactor is Zn(2+). It depends on Co(2+) as a cofactor.

It carries out the reaction N-succinyl-(2S,6S)-2,6-diaminopimelate + H2O = (2S,6S)-2,6-diaminopimelate + succinate. Its pathway is amino-acid biosynthesis; L-lysine biosynthesis via DAP pathway; LL-2,6-diaminopimelate from (S)-tetrahydrodipicolinate (succinylase route): step 3/3. Catalyzes the hydrolysis of N-succinyl-L,L-diaminopimelic acid (SDAP), forming succinate and LL-2,6-diaminopimelate (DAP), an intermediate involved in the bacterial biosynthesis of lysine and meso-diaminopimelic acid, an essential component of bacterial cell walls. In Shewanella baltica (strain OS223), this protein is Succinyl-diaminopimelate desuccinylase.